The sequence spans 204 residues: Tumor necrosis factor receptor superfamily member 26 (204 aa).

The first 19 residues, 1–19, serve as a signal peptide directing secretion; sequence MTRLRLLLLLGLLLRVAVC. Residues 20–164 are Extracellular-facing; the sequence is SVNTITLCKI…SQCFCFSKPL (145 aa). Disulfide bonds link Cys27–Cys38, Cys39–Cys52, Cys42–Cys61, Cys64–Cys79, Cys82–Cys95, Cys85–Cys103, Cys105–Cys120, Cys123–Cys135, and Cys126–Cys143. TNFR-Cys repeat units lie at residues 27-61, 63-103, and 104-143; these read CKIG…KSEC, PCDS…DRVC, and QCKQ…DTVC. Asn57 is a glycosylation site (N-linked (GlcNAc...) asparagine). Asn136 carries an N-linked (GlcNAc...) asparagine glycan. The helical transmembrane segment at 165–185 threads the bilayer; sequence GIVVIIAAFIIIIGAVIILIL. The Cytoplasmic portion of the chain corresponds to 186–204; it reads KIICYCKRGENIQLSSTML.

As to expression, expressed in thymus and spleen. Detectable levels in lung.

It localises to the membrane. The protein is Tumor necrosis factor receptor superfamily member 26 (Tnfrsf26) of Mus musculus (Mouse).